Here is a 610-residue protein sequence, read N- to C-terminus: Elongation factor 4 (610 aa).

The 183-residue stretch at 11–193 folds into the tr-type G domain; it reads EKIRNFSIIA…QIVEKVPAPT (183 aa). GTP is bound by residues 23 to 28 and 140 to 143; these read DHGKST and NKID.

Belongs to the TRAFAC class translation factor GTPase superfamily. Classic translation factor GTPase family. LepA subfamily.

Its subcellular location is the cell membrane. The enzyme catalyses GTP + H2O = GDP + phosphate + H(+). Its function is as follows. Required for accurate and efficient protein synthesis under certain stress conditions. May act as a fidelity factor of the translation reaction, by catalyzing a one-codon backward translocation of tRNAs on improperly translocated ribosomes. Back-translocation proceeds from a post-translocation (POST) complex to a pre-translocation (PRE) complex, thus giving elongation factor G a second chance to translocate the tRNAs correctly. Binds to ribosomes in a GTP-dependent manner. The chain is Elongation factor 4 from Streptococcus pyogenes serotype M3 (strain ATCC BAA-595 / MGAS315).